The sequence spans 220 residues: UPF0319 protein YccT (220 aa).

Positions 1-20 are cleaved as a signal peptide; that stretch reads MKAGTLTLLIALCLPISVSA.

The protein belongs to the UPF0319 family.

This chain is UPF0319 protein YccT, found in Escherichia fergusonii (strain ATCC 35469 / DSM 13698 / CCUG 18766 / IAM 14443 / JCM 21226 / LMG 7866 / NBRC 102419 / NCTC 12128 / CDC 0568-73).